The sequence spans 696 residues: DNA-directed RNA polymerase subunit beta' (696 aa).

The Zn(2+) site is built by C70, C72, C85, and C88. Mg(2+)-binding residues include D540, D542, and D544.

This sequence belongs to the RNA polymerase beta' chain family. RpoC1 subfamily. In terms of assembly, in plastids the minimal PEP RNA polymerase catalytic core is composed of four subunits: alpha, beta, beta', and beta''. When a (nuclear-encoded) sigma factor is associated with the core the holoenzyme is formed, which can initiate transcription. Mg(2+) is required as a cofactor. Requires Zn(2+) as cofactor.

The protein localises to the plastid. Its subcellular location is the chloroplast. It catalyses the reaction RNA(n) + a ribonucleoside 5'-triphosphate = RNA(n+1) + diphosphate. In terms of biological role, DNA-dependent RNA polymerase catalyzes the transcription of DNA into RNA using the four ribonucleoside triphosphates as substrates. This chain is DNA-directed RNA polymerase subunit beta', found in Phaeodactylum tricornutum (strain CCAP 1055/1).